Consider the following 365-residue polypeptide: tRNA (guanine(6)-N2)-methyltransferase (365 aa).

A THUMP domain is found at 69-182; that stretch reads NENSRLLHRV…KDVFFLGIDT (114 aa). Residues 198–202, 228–230, glutamate 248, 276–277, and asparagine 293 each bind S-adenosyl-L-methionine; these read HPAHL, SGT, and DA.

This sequence belongs to the methyltransferase superfamily. As to quaternary structure, monomer in solution.

The protein resides in the cytoplasm. It carries out the reaction guanosine(6) in tRNA + S-adenosyl-L-methionine = N(2)-methylguanosine(6) in tRNA + S-adenosyl-L-homocysteine + H(+). Its function is as follows. S-adenosyl-L-methionine-dependent methyltransferase that catalyzes the methylation of the guanosine nucleotide at position 6 (m2G6) in tRNA(Phe). The polypeptide is tRNA (guanine(6)-N2)-methyltransferase (Pyrococcus furiosus (strain ATCC 43587 / DSM 3638 / JCM 8422 / Vc1)).